Consider the following 590-residue polypeptide: V-type ATP synthase alpha chain (590 aa).

Residue 232–239 (GPFGSGKT) coordinates ATP.

The protein belongs to the ATPase alpha/beta chains family.

It catalyses the reaction ATP + H2O + 4 H(+)(in) = ADP + phosphate + 5 H(+)(out). Functionally, produces ATP from ADP in the presence of a proton gradient across the membrane. The V-type alpha chain is a catalytic subunit. The chain is V-type ATP synthase alpha chain from Thermoanaerobacter sp. (strain X514).